We begin with the raw amino-acid sequence, 667 residues long: High affinity sulfate transporter 1 (667 aa).

The interval 16–38 (ETRSNSSSHRHGGGGGGDDTTSL) is disordered. 11 consecutive transmembrane segments (helical) span residues 106-126 (GDFIAGLTIASLCIPQDLAYA), 131-151 (LDPWYGLYSSFVAPLVYAFMG), 156-176 (IAIGPVAVVSLLLGTLLSNEI), 185-205 (LRLAFTATFFAGVTQMLLGVC), 208-228 (GFLIDFLSHAAIVGFMAGAAI), 269-289 (WETILIGLSFLIFLLITKYIA), 296-316 (FWVSAISPMISVIVSTFFVYI), 350-370 (GAGVRVGVVAGLVALTEAIAI), 425-445 (VSNIVMSIVVLLTLLVITPLF), 452-472 (VLASIIIAAVVNLVNIEAMVL), and 486-506 (GAFFGVIFKSVEIGLLIAVAI). One can recognise an STAS domain in the interval 537 to 660 (QYPKAAQIPG…LTVADAVATY (124 aa)).

Belongs to the SLC26A/SulP transporter (TC 2.A.53) family.

It localises to the membrane. Its function is as follows. High-affinity H(+)/sulfate cotransporter that mediates the uptake of sulfate by plant roots from low concentrations of sulfate in the soil solution. The protein is High affinity sulfate transporter 1 (ST1) of Stylosanthes hamata (Caribbean stylo).